The chain runs to 186 residues: Peptidyl-tRNA hydrolase (186 aa).

The active-site Proton acceptor is the His-19. 3 residues coordinate tRNA: Phe-64, Asn-66, and Asn-112.

The protein belongs to the PTH family. As to quaternary structure, monomer.

The protein resides in the cytoplasm. The catalysed reaction is an N-acyl-L-alpha-aminoacyl-tRNA + H2O = an N-acyl-L-amino acid + a tRNA + H(+). In terms of biological role, hydrolyzes ribosome-free peptidyl-tRNAs (with 1 or more amino acids incorporated), which drop off the ribosome during protein synthesis, or as a result of ribosome stalling. Catalyzes the release of premature peptidyl moieties from peptidyl-tRNA molecules trapped in stalled 50S ribosomal subunits, and thus maintains levels of free tRNAs and 50S ribosomes. The polypeptide is Peptidyl-tRNA hydrolase (Pelagibacter ubique (strain HTCC1062)).